A 238-amino-acid polypeptide reads, in one-letter code: Xyloglucan-specific endo-beta-1,4-glucanase A (238 aa).

The signal sequence occupies residues 1-14 (MKLSLLSLATLASA).

The protein belongs to the glycosyl hydrolase 12 (cellulase H) family.

Its subcellular location is the secreted. The enzyme catalyses xyloglucan + H2O = xyloglucan oligosaccharides.. Functionally, catalyzes endohydrolysis of 1,4-beta-D-glucosidic linkages in xyloglucan with retention of the beta-configuration of the glycosyl residues. Specific for xyloglucan and does not hydrolyze other cell wall components. This is Xyloglucan-specific endo-beta-1,4-glucanase A (xgeA) from Aspergillus aculeatus.